A 325-amino-acid chain; its full sequence is Post-GPI attachment to proteins factor 2-like (325 aa).

Transmembrane regions (helical) follow at residues 80–100, 130–150, 171–191, 205–225, 243–263, and 276–296; these read VVTA…AYVF, YFWR…AFVY, LLIT…GGVT, IFIT…KLNG, WKKI…VFFA, and WFAF…FTII.

Belongs to the PGAP2 family.

The protein resides in the membrane. This Drosophila melanogaster (Fruit fly) protein is Post-GPI attachment to proteins factor 2-like.